The primary structure comprises 88 residues: uncharacterized protein (88 aa).

This is an uncharacterized protein from Treponema pallidum (strain Nichols).